Here is a 553-residue protein sequence, read N- to C-terminus: HTH-type transcriptional regulator SgrR (553 aa).

Residues 1-113 (MSTSRLQQQF…RQMLLSQLGR (113 aa)) enclose the HTH marR-type domain. The segment at residues 26 to 49 (LQALAEVLNCSRRHVRSLLGKMQH) is a DNA-binding region (H-T-H motif). A solute-binding region spans residues 163–494 (ELEPDLSHHW…EELHQDIESW (332 aa)).

In terms of biological role, activates the small RNA gene sgrS under glucose-phosphate stress conditions as well as yfdZ. Represses its own transcription under both stress and non-stress conditions. Might act as a sensor of the intracellular accumulation of phosphoglucose by binding these molecules in its C-terminal solute-binding domain. This is HTH-type transcriptional regulator SgrR from Yersinia pseudotuberculosis serotype I (strain IP32953).